The primary structure comprises 110 residues: MRFLVLTGLSGAGKTTARGFLEDLGYFMVDNLPPRLWPPLLQEAAARGLARVGVVVDARALAFFQDLEEVLEALRPTVVYLEARPEVLLRRYNLTRRVHPLGAGNLMREI.

8–15 serves as a coordination point for ATP; it reads GLSGAGKT. Residue 57–60 coordinates GTP; that stretch reads DARA.

Belongs to the RapZ-like family.

Its function is as follows. Displays ATPase and GTPase activities. The polypeptide is Nucleotide-binding protein in fmt 3'region (Thermus thermophilus).